Here is a 256-residue protein sequence, read N- to C-terminus: Probable histidine-binding protein (256 aa).

An N-terminal signal peptide occupies residues 1 to 19 (MKKFLTAFLVAFTGLFLVA). A lipid anchor (N-palmitoyl cysteine) is attached at cysteine 20. The S-diacylglycerol cysteine moiety is linked to residue cysteine 20.

It belongs to the bacterial solute-binding protein 3 family.

Its subcellular location is the cell membrane. In terms of biological role, involved in histidine transport. The chain is Probable histidine-binding protein (hisJ) from Campylobacter jejuni subsp. jejuni serotype O:2 (strain ATCC 700819 / NCTC 11168).